Reading from the N-terminus, the 453-residue chain is Retroviral integration site protein Fli-1 homolog (453 aa).

Positions 111-197 (PPPPNMTTNE…SHLNYLRDSS (87 aa)) constitute a PNT domain. Over residues 201 to 214 (GYNTQAHTDQSSRL) the composition is skewed to polar residues. The tract at residues 201–273 (GYNTQAHTDQ…YQILGPTSSR (73 aa)) is disordered. The span at 215-226 (TAKEDPSYEAVR) shows a compositional bias: basic and acidic residues. Polar residues-rich tracts occupy residues 230–239 (WGNSMSSPVT) and 246–273 (GTQN…TSSR). Positions 282–362 (IQLWQFLLEL…HGKRYAYKFD (81 aa)) form a DNA-binding region, ETS.

The protein belongs to the ETS family.

Its subcellular location is the nucleus. This chain is Retroviral integration site protein Fli-1 homolog (fli1), found in Xenopus laevis (African clawed frog).